The following is a 668-amino-acid chain: 1-deoxy-D-xylulose-5-phosphate synthase (668 aa).

Thiamine diphosphate-binding positions include H105 and 146–148 (AHS). D177 is a binding site for Mg(2+). Residues 178–179 (GA), N206, Y316, and E398 contribute to the thiamine diphosphate site. N206 lines the Mg(2+) pocket.

It belongs to the transketolase family. DXPS subfamily. Homodimer. It depends on Mg(2+) as a cofactor. Thiamine diphosphate is required as a cofactor.

It catalyses the reaction D-glyceraldehyde 3-phosphate + pyruvate + H(+) = 1-deoxy-D-xylulose 5-phosphate + CO2. The protein operates within metabolic intermediate biosynthesis; 1-deoxy-D-xylulose 5-phosphate biosynthesis; 1-deoxy-D-xylulose 5-phosphate from D-glyceraldehyde 3-phosphate and pyruvate: step 1/1. Its function is as follows. Catalyzes the acyloin condensation reaction between C atoms 2 and 3 of pyruvate and glyceraldehyde 3-phosphate to yield 1-deoxy-D-xylulose-5-phosphate (DXP). This is 1-deoxy-D-xylulose-5-phosphate synthase from Nitrobacter hamburgensis (strain DSM 10229 / NCIMB 13809 / X14).